Here is a 491-residue protein sequence, read N- to C-terminus: Xaa-Pro aminopeptidase 1 (491 aa).

Residues 1 to 32 (MAEELTPENPAIPETPEETEEPIKQRKNGLYP) form a disordered region. Positions 308, 320, 403, 434, and 458 each coordinate Mn(2+).

Belongs to the peptidase M24B family. In terms of assembly, homodimer. The cofactor is Mn(2+).

It carries out the reaction Release of any N-terminal amino acid, including proline, that is linked to proline, even from a dipeptide or tripeptide.. This is Xaa-Pro aminopeptidase 1 (pepPI) from Streptomyces coelicolor (strain ATCC BAA-471 / A3(2) / M145).